Reading from the N-terminus, the 263-residue chain is MASSSSVLLVVVLFAVFLGSAYGIPKVPPGPNITATYGDKWLDAKSTWYGKPTGAGPKDNGGACGYKDVDKPPFSGMTGCGNTPIFKSGRGCGSCFEIKCTKPEACSGEPVVVHITDDNEEPIAPYHFDLSGHAFGAMAKKGDEQKLRSAGELELQFRRVKCKYPEGTKVTFHVEKGSNPNYLALLVKYVNGDGDVVAVDIKEKGKDKWIELKESWGAIWRIDTPDKLTGPFTVRYTTEGGTKTEAEDVIPEGWKADTSYESK.

An N-terminal signal peptide occupies residues 1–23; that stretch reads MASSSSVLLVVVLFAVFLGSAYG. Asparagine 32 carries N-linked (GlcNAc...) asparagine glycosylation. In terms of domain architecture, Expansin-like EG45 spans 61 to 167; sequence GGACGYKDVD…RRVKCKYPEG (107 aa). Cystine bridges form between cysteine 64–cysteine 92, cysteine 95–cysteine 162, and cysteine 100–cysteine 106. The region spanning 181-262 is the Expansin-like CBD domain; sequence NYLALLVKYV…GWKADTSYES (82 aa).

This sequence belongs to the expansin family. Expansin B subfamily. Homodimer.

It is found in the secreted. The polypeptide is Pollen allergen Phl p 1 (PHLPI) (Phleum pratense (Common timothy)).